Consider the following 259-residue polypeptide: MPRLLPVEACDLPEDYDPSVPPRTPQEYLRRVQIEAARCPDVVIAQIDPKKLRKKQTVSISLSGCQPAPDGYSPSLRWQQQQVAQFSAVRQSLHKHRGHWRSQPLDSNVTMPSTEDEESWKKFCLGERLYSDLAAALNSESQHPGIDYIKVGFPPLLSIVSRMSQATVTSVLEYLVNWFEERNFTPELGRWLYALLACLEKPLLPEAHSLIRQLARRCSQIRAGVEHKEDDRVSPLNLFICLVGRYFEQRDLADCGDPS.

It belongs to the gemin-2 family. Forms a stable heteromeric complex with survival of motor neuron protein (SMN), GEMIN3 and GEMIN4. The SMN complex is associated with the spliceosomal snRNAs U1 and U5 in the cytoplasm of oocytes.

The protein localises to the nucleus. Its subcellular location is the gem. The protein resides in the cytoplasm. Functionally, the SMN complex catalyzes the assembly of small nuclear ribonucleoproteins (snRNPs), the building blocks of the spliceosome, and thereby plays an important role in the splicing of cellular pre-mRNAs. Most spliceosomal snRNPs contain a common set of Sm proteins SNRPB, SNRPD1, SNRPD2, SNRPD3, SNRPE, SNRPF and SNRPG that assemble in a heptameric protein ring on the Sm site of the small nuclear RNA to form the core snRNP (Sm core). In the cytosol, the Sm proteins SNRPD1, SNRPD2, SNRPE, SNRPF and SNRPG (5Sm) are trapped in an inactive 6S pICln-Sm complex by the chaperone CLNS1A that controls the assembly of the core snRNP. To assemble core snRNPs, the SMN complex accepts the trapped 5Sm proteins from CLNS1A. Binding of snRNA inside 5Sm ultimately triggers eviction of the SMN complex, thereby allowing binding of SNRPD3 and SNRPB to complete assembly of the core snRNP. Within the SMN complex, GEMIN2 constrains the conformation of 5Sm, thereby promoting 5Sm binding to snRNA containing the snRNP code (a nonameric Sm site and a 3'-adjacent stem-loop), thus preventing progression of assembly until a cognate substrate is bound. The polypeptide is Gem-associated protein 2 (gemin2) (Xenopus laevis (African clawed frog)).